A 103-amino-acid polypeptide reads, in one-letter code: Histone H4 (103 aa).

A compositionally biased stretch (gly residues) spans 1–14 (MSGRGKGGKGLGKG). The interval 1-20 (MSGRGKGGKGLGKGGAKRHR) is disordered. Lys6 bears the N6-acetyl-N6-methyllysine; alternate mark. N6-methyllysine; alternate occurs at positions 6, 9, and 13. The residue at position 13 (Lys13) is an N6-acetyl-N6-methyllysine; alternate. A DNA-binding region spans residues 17 to 21 (KRHRK). At Lys92 the chain carries N6-glutaryllysine.

This sequence belongs to the histone H4 family. As to quaternary structure, the nucleosome is a histone octamer containing two molecules each of H2A, H2B, H3 and H4 assembled in one H3-H4 heterotetramer and two H2A-H2B heterodimers. The octamer wraps approximately 147 bp of DNA. Post-translationally, glutarylation at Lys-92 (H4K91glu) destabilizes nucleosomes by promoting dissociation of the H2A-H2B dimers from nucleosomes.

It is found in the nucleus. Its subcellular location is the chromosome. In terms of biological role, core component of nucleosome. Nucleosomes wrap and compact DNA into chromatin, limiting DNA accessibility to the cellular machineries which require DNA as a template. Histones thereby play a central role in transcription regulation, DNA repair, DNA replication and chromosomal stability. DNA accessibility is regulated via a complex set of post-translational modifications of histones, also called histone code, and nucleosome remodeling. The polypeptide is Histone H4 (HHF1) (Mycosarcoma maydis (Corn smut fungus)).